The following is a 138-amino-acid chain: ATP synthase epsilon chain (138 aa).

The protein belongs to the ATPase epsilon chain family. F-type ATPases have 2 components, CF(1) - the catalytic core - and CF(0) - the membrane proton channel. CF(1) has five subunits: alpha(3), beta(3), gamma(1), delta(1), epsilon(1). CF(0) has three main subunits: a, b and c.

Its subcellular location is the cell inner membrane. Produces ATP from ADP in the presence of a proton gradient across the membrane. The protein is ATP synthase epsilon chain of Polaromonas sp. (strain JS666 / ATCC BAA-500).